The chain runs to 814 residues: DNA ligase (814 aa).

Residues 46 to 50 (DAEYD), 95 to 96 (SL), and Glu129 contribute to the NAD(+) site. The N6-AMP-lysine intermediate role is filled by Lys131. The NAD(+) site is built by Arg152, Glu189, Lys305, and Lys329. Zn(2+) is bound by residues Cys434, Cys437, Cys458, and Cys464. The interval 525–548 (LSAQRRSEGEPAPKKPTKKKGEEE) is disordered. A BRCT domain is found at 735–814 (TSAAAFAGKT…DDWLAMLAEA (80 aa)).

The protein belongs to the NAD-dependent DNA ligase family. LigA subfamily. The cofactor is Mg(2+). It depends on Mn(2+) as a cofactor.

It carries out the reaction NAD(+) + (deoxyribonucleotide)n-3'-hydroxyl + 5'-phospho-(deoxyribonucleotide)m = (deoxyribonucleotide)n+m + AMP + beta-nicotinamide D-nucleotide.. In terms of biological role, DNA ligase that catalyzes the formation of phosphodiester linkages between 5'-phosphoryl and 3'-hydroxyl groups in double-stranded DNA using NAD as a coenzyme and as the energy source for the reaction. It is essential for DNA replication and repair of damaged DNA. The chain is DNA ligase from Methylorubrum extorquens (strain PA1) (Methylobacterium extorquens).